A 307-amino-acid chain; its full sequence is Ribonuclease Z (307 aa).

Residues His-63, His-65, Asp-67, His-68, His-141, Asp-212, and His-270 each coordinate Zn(2+). Asp-67 serves as the catalytic Proton acceptor.

Belongs to the RNase Z family. As to quaternary structure, homodimer. Zn(2+) is required as a cofactor.

It carries out the reaction Endonucleolytic cleavage of RNA, removing extra 3' nucleotides from tRNA precursor, generating 3' termini of tRNAs. A 3'-hydroxy group is left at the tRNA terminus and a 5'-phosphoryl group is left at the trailer molecule.. Its function is as follows. Zinc phosphodiesterase, which displays some tRNA 3'-processing endonuclease activity. Probably involved in tRNA maturation, by removing a 3'-trailer from precursor tRNA. This Bacillus cereus (strain G9842) protein is Ribonuclease Z.